The chain runs to 28 residues: Trypsin inhibitor 2 (28 aa).

Intrachain disulfides connect cysteine 3/cysteine 20, cysteine 10/cysteine 22, and cysteine 16/cysteine 27.

The protein belongs to the protease inhibitor I7 (squash-type serine protease inhibitor) family.

The protein resides in the secreted. Functionally, inhibits trypsin. The chain is Trypsin inhibitor 2 from Momordica charantia (Bitter gourd).